Consider the following 844-residue polypeptide: Translation initiation factor IF-2 (844 aa).

The segment covering 1-11 has biased composition (basic and acidic residues); sequence MTEDVKADAPK. Disordered regions lie at residues 1 to 48 and 79 to 249; these read MTED…VKTD and RLEA…GTAL. Over residues 21–30 the composition is skewed to low complexity; sequence TTVSSTTTGG. The segment covering 79–161 has biased composition (basic and acidic residues); that stretch reads RLEAEKAATK…AAEEAKRYAE (83 aa). Residues 162–175 are compositionally biased toward acidic residues; it reads ADDSDNESSSEDYS. Over residues 200-210 the composition is skewed to basic residues; sequence RGKNKVAKAKK. The span at 211–237 shows a compositional bias: basic and acidic residues; the sequence is GGRDDENSKNSKNERESNRKNQKDAKF. In terms of domain architecture, tr-type G spans 343–513; it reads TRAPVVTIMG…LLQSEVLELT (171 aa). Residues 352–359 form a G1 region; it reads GHVDHGKT. 352 to 359 provides a ligand contact to GTP; the sequence is GHVDHGKT. The segment at 377 to 381 is G2; it reads GITQH. A G3 region spans residues 399-402; it reads DTPG. Residues 399-403 and 453-456 each bind GTP; these read DTPGH and NKID. Positions 453–456 are G4; that stretch reads NKID. Residues 489–491 are G5; that stretch reads SAK.

It belongs to the TRAFAC class translation factor GTPase superfamily. Classic translation factor GTPase family. IF-2 subfamily.

It is found in the cytoplasm. One of the essential components for the initiation of protein synthesis. Protects formylmethionyl-tRNA from spontaneous hydrolysis and promotes its binding to the 30S ribosomal subunits. Also involved in the hydrolysis of GTP during the formation of the 70S ribosomal complex. This Haemophilus influenzae (strain 86-028NP) protein is Translation initiation factor IF-2.